A 371-amino-acid polypeptide reads, in one-letter code: Cytoplasmic dynein intermediate light chain DYN3 (371 aa).

Belongs to the dynein light intermediate chain DYN3 family. The cytoplasmic dynein is composed of at least two heavy chains and a number of intermediate and light chains.

The protein localises to the cytoplasm. Its subcellular location is the cytoskeleton. Component of the cytoplasmic dynein which acts as a motor for the intracellular retrograde motility of vesicles and organelles along microtubules. May play an important role in the proper orientation of the mitotic spindle into the budding daughter cell yeast. Probably required for normal progression of the cell cycle. The polypeptide is Cytoplasmic dynein intermediate light chain DYN3 (DYN3) (Eremothecium gossypii (strain ATCC 10895 / CBS 109.51 / FGSC 9923 / NRRL Y-1056) (Yeast)).